A 246-amino-acid polypeptide reads, in one-letter code: Probable transcriptional regulatory protein WP1214 (246 aa).

The tract at residues 1–22 is disordered; the sequence is MAGHSQFSNIKHRKGAQDAKRS.

Belongs to the TACO1 family.

It localises to the cytoplasm. This chain is Probable transcriptional regulatory protein WP1214, found in Wolbachia pipientis subsp. Culex pipiens (strain wPip).